The sequence spans 126 residues: Fluoride-specific ion channel FluC (126 aa).

4 helical membrane-spanning segments follow: residues 3–23 (FAIL…RFLV), 37–57 (IGTL…IACV), 70–90 (VIGL…MDNV), and 104–124 (NVLL…HWLM). 2 residues coordinate Na(+): Gly-77 and Thr-80.

This sequence belongs to the fluoride channel Fluc/FEX (TC 1.A.43) family.

The protein resides in the cell inner membrane. The catalysed reaction is fluoride(in) = fluoride(out). Its activity is regulated as follows. Na(+) is not transported, but it plays an essential structural role and its presence is essential for fluoride channel function. In terms of biological role, fluoride-specific ion channel. Important for reducing fluoride concentration in the cell, thus reducing its toxicity. This chain is Fluoride-specific ion channel FluC, found in Vibrio cholerae serotype O1 (strain ATCC 39541 / Classical Ogawa 395 / O395).